Reading from the N-terminus, the 199-residue chain is MAKLETLKAALEKVLGKRVQKLIEATGELTLIVKADDYLEVARTLRDDPSLRFEQLIDLCGVDYSDFGDGAWDGLRFAAVSHLLSVTHNWRLRLRVFAPDDDFPVVPSLIDVWNSVNWFEREAFDFYGIVFEGHPDLRRLLTDYGFVGHPFRKDFPVSGYVEMRYDPEQKRVIYQPVTIEPREITPRVIREENYGGTQH.

It belongs to the complex I 30 kDa subunit family. In terms of assembly, NDH-1 is composed of 14 different subunits. Subunits NuoB, C, D, E, F, and G constitute the peripheral sector of the complex.

It is found in the cell inner membrane. It carries out the reaction a quinone + NADH + 5 H(+)(in) = a quinol + NAD(+) + 4 H(+)(out). Its function is as follows. NDH-1 shuttles electrons from NADH, via FMN and iron-sulfur (Fe-S) centers, to quinones in the respiratory chain. The immediate electron acceptor for the enzyme in this species is believed to be ubiquinone. Couples the redox reaction to proton translocation (for every two electrons transferred, four hydrogen ions are translocated across the cytoplasmic membrane), and thus conserves the redox energy in a proton gradient. This Cupriavidus pinatubonensis (strain JMP 134 / LMG 1197) (Cupriavidus necator (strain JMP 134)) protein is NADH-quinone oxidoreductase subunit C.